Reading from the N-terminus, the 442-residue chain is SPRY domain-containing protein 3 (442 aa).

The B30.2/SPRY domain maps to 17–204; sequence DLNLHYRFLN…VRLHLNAELG (188 aa). A disordered region spans residues 371–394; the sequence is EGEEEEEEEEEEEDGEEIEPEHEG. Over residues 372–390 the composition is skewed to acidic residues; that stretch reads GEEEEEEEEEEEDGEEIEP.

The polypeptide is SPRY domain-containing protein 3 (SPRYD3) (Homo sapiens (Human)).